The primary structure comprises 192 residues: Sarcoplasmic calcium-binding protein, alpha-B and -A chains (192 aa).

The residue at position 1 (alanine 1) is an N-acetylalanine. 4 consecutive EF-hand domains span residues 4–39 (WDNR…NTLI), 56–91 (IMRN…HCQG), 100–135 (AFKV…RSAF), and 136–171 (AEVK…YAQF). Residues aspartate 17, aspartate 19, aspartate 21, aspartate 28, aspartate 69, asparagine 71, aspartate 73, glutamate 75, glutamate 80, aspartate 113, asparagine 115, aspartate 117, lysine 119, and glutamate 124 each coordinate Ca(2+).

SCPs from crayfish, lobster, and shrimp are polymorphic dimers; three isotypes (alpha-alpha, alpha-beta, and beta-beta) have been identified.

Like parvalbumins, SCPs seem to be more abundant in fast contracting muscles, but no functional relationship can be established from this distribution. The protein is Sarcoplasmic calcium-binding protein, alpha-B and -A chains of Penaeus sp. (Penoeid shrimp).